Here is a 1224-residue protein sequence, read N- to C-terminus: DNA-directed RNA polymerase subunit beta (1224 aa).

The protein belongs to the RNA polymerase beta chain family. As to quaternary structure, the RNAP catalytic core consists of 2 alpha, 1 beta, 1 beta' and 1 omega subunit. When a sigma factor is associated with the core the holoenzyme is formed, which can initiate transcription.

It carries out the reaction RNA(n) + a ribonucleoside 5'-triphosphate = RNA(n+1) + diphosphate. Functionally, DNA-dependent RNA polymerase catalyzes the transcription of DNA into RNA using the four ribonucleoside triphosphates as substrates. In Pelotomaculum thermopropionicum (strain DSM 13744 / JCM 10971 / SI), this protein is DNA-directed RNA polymerase subunit beta.